The primary structure comprises 343 residues: tRNA N6-adenosine threonylcarbamoyltransferase (343 aa).

Fe cation-binding residues include H116 and H120. Substrate-binding positions include 139–143, D172, G185, D189, and N280; that span reads TVSGG. D308 lines the Fe cation pocket.

Belongs to the KAE1 / TsaD family. The cofactor is Fe(2+).

Its subcellular location is the cytoplasm. It catalyses the reaction L-threonylcarbamoyladenylate + adenosine(37) in tRNA = N(6)-L-threonylcarbamoyladenosine(37) in tRNA + AMP + H(+). Functionally, required for the formation of a threonylcarbamoyl group on adenosine at position 37 (t(6)A37) in tRNAs that read codons beginning with adenine. Is involved in the transfer of the threonylcarbamoyl moiety of threonylcarbamoyl-AMP (TC-AMP) to the N6 group of A37, together with TsaE and TsaB. TsaD likely plays a direct catalytic role in this reaction. The protein is tRNA N6-adenosine threonylcarbamoyltransferase of Cytophaga hutchinsonii (strain ATCC 33406 / DSM 1761 / CIP 103989 / NBRC 15051 / NCIMB 9469 / D465).